The chain runs to 119 residues: Dihydroneopterin aldolase (119 aa).

Residues Glu-21, Tyr-53, and 72 to 73 (IE) each bind substrate. The active-site Proton donor/acceptor is Lys-99.

The protein belongs to the DHNA family.

The catalysed reaction is 7,8-dihydroneopterin = 6-hydroxymethyl-7,8-dihydropterin + glycolaldehyde. The protein operates within cofactor biosynthesis; tetrahydrofolate biosynthesis; 2-amino-4-hydroxy-6-hydroxymethyl-7,8-dihydropteridine diphosphate from 7,8-dihydroneopterin triphosphate: step 3/4. Catalyzes the conversion of 7,8-dihydroneopterin to 6-hydroxymethyl-7,8-dihydropterin. In Streptococcus pyogenes serotype M3 (strain ATCC BAA-595 / MGAS315), this protein is Dihydroneopterin aldolase (folB).